The chain runs to 395 residues: E3 ubiquitin-protein ligase RDUF1 (395 aa).

Disordered stretches follow at residues 1–22 (MMPN…TTTT) and 107–130 (PVIV…EGDG). Residues 9-22 (TITPTTESTTTTTT) are compositionally biased toward low complexity. A compositionally biased stretch (basic and acidic residues) spans 121-130 (ERVENEEGDG). Residues 215–256 (CAVCTEVFEAGIEGREMPCKHIFHGDCIVPWLSIRNSCPVCR) form an RING-type; atypical zinc finger.

Expressed in root tips, leaf tips, junction of carpels and pedicels, stigma, anthers, pollen, vasculature of sepals and petals, immature seeds and embryos.

Its subcellular location is the cytoplasm. The protein localises to the cytosol. It localises to the nucleus. The catalysed reaction is S-ubiquitinyl-[E2 ubiquitin-conjugating enzyme]-L-cysteine + [acceptor protein]-L-lysine = [E2 ubiquitin-conjugating enzyme]-L-cysteine + N(6)-ubiquitinyl-[acceptor protein]-L-lysine.. It functions in the pathway protein modification; protein ubiquitination. In terms of biological role, E3 ubiquitin-protein ligase involved in the positive regulation of abscisic acid-dependent drought stress responses. Involved in the positive regulation of responses to salt and osmotic stresses during seed germination and early seedling development. Possesses E3 ubiquitin ligase activity in vitro. This Arabidopsis thaliana (Mouse-ear cress) protein is E3 ubiquitin-protein ligase RDUF1.